A 314-amino-acid chain; its full sequence is Porphobilinogen deaminase (314 aa).

C249 carries the post-translational modification S-(dipyrrolylmethanemethyl)cysteine.

This sequence belongs to the HMBS family. In terms of assembly, monomer. It depends on dipyrromethane as a cofactor.

It carries out the reaction 4 porphobilinogen + H2O = hydroxymethylbilane + 4 NH4(+). The protein operates within porphyrin-containing compound metabolism; protoporphyrin-IX biosynthesis; coproporphyrinogen-III from 5-aminolevulinate: step 2/4. Its function is as follows. Tetrapolymerization of the monopyrrole PBG into the hydroxymethylbilane pre-uroporphyrinogen in several discrete steps. The protein is Porphobilinogen deaminase of Brucella suis biovar 1 (strain 1330).